Reading from the N-terminus, the 224-residue chain is Virulence transcriptional regulatory protein PhoP (224 aa).

The Response regulatory domain maps to 3–117; that stretch reads RVLVVEDNAL…EVMARMQALM (115 aa). Position 52 is a 4-aspartylphosphate (Asp52). The ompR/PhoB-type DNA-binding region spans 125 to 223; it reads SQVINIPPFQ…VRGQGYLFEL (99 aa).

As to quaternary structure, monomer in the inactive, unphosphorylated state and dimer in the active, phosphorylated state. In terms of processing, phosphorylated by PhoQ.

The protein localises to the cytoplasm. Functionally, member of the two-component regulatory system PhoP/PhoQ which regulates the expression of genes involved in virulence, adaptation to acidic and low Mg(2+) environments and resistance to host defense antimicrobial peptides. Essential for intramacrophage survival of S.typhimurium. In low periplasmic Mg(2+), PhoQ phosphorylates PhoP, resulting in the expression of PhoP-activated genes (PAG) and repression of PhoP-repressed genes (PRG). In high periplasmic Mg(2+), PhoQ dephosphorylates phospho-PhoP, resulting in the repression of PAG and may lead to expression of some PRG. Essential for transcription of spiC inside macrophages by controlling the expression of the two-component regulatory system SsrB/SpiR (SsrA) and Pir at transcriptional and post-transcriptional levels respectively. Promotes expression of the two-component regulatory system PmrA/PmrB via activation of pmrD gene. Is required to attenuate bacterial growth within fibroblast cells and to enhance bacterial resistance to bile in intestinal cells. Negatively regulates prgH, which is required for invasion of epithelial cells. PhoP uses multiple mechanisms to promote transcription and activates promoters for PAG at low (uM range) Mg(2+) concentrations. Involved in acid tolerance. The chain is Virulence transcriptional regulatory protein PhoP (phoP) from Salmonella typhimurium (strain SL1344).